A 164-amino-acid chain; its full sequence is MKRHSENKKSGPVGPSQRQLRAGELIRHALVDILREEDLVDPALAGISVTISEVRMSADLKHAICFVEPLGASIAPQVEREPSSPSRTVVVPGSPAEVVAGLTRLTKFLRGKLAKTIDMKFTPELKFLHDETFNSATYMDRLFEDPRVQQDVRRLSDVAEDEEG.

This sequence belongs to the RbfA family. Monomer. Binds 30S ribosomal subunits, but not 50S ribosomal subunits or 70S ribosomes.

It localises to the cytoplasm. In terms of biological role, one of several proteins that assist in the late maturation steps of the functional core of the 30S ribosomal subunit. Associates with free 30S ribosomal subunits (but not with 30S subunits that are part of 70S ribosomes or polysomes). Required for efficient processing of 16S rRNA. May interact with the 5'-terminal helix region of 16S rRNA. In Caulobacter sp. (strain K31), this protein is Ribosome-binding factor A.